The primary structure comprises 394 residues: MATIRNQRFSLLKQPISSILNQHLIDYPTPSNLSYWWGFGSLAGICLVIQIVTGVFLAMHYTPHVDLAFNSVEHIMRDVEGGWLLRYMHANGASMFFIVVYLHTFRGLYYASYSSPREFVWCLGVVIFLLMIVTAFIGYVLPWGQMSFWGATVITSLASAIPVVGDTIVTWLWGGFSVDNATLNRFFSLYHLLPFILVGASLLHLAALHQYGSSNPLGVHSEMDKISFYPYFYVKDLVGWVAFAIFFSIWIFYAPNVLGHPDNYIPANPMSTPPHIVPEWYFLPIYAILRSIPDKAGGVAAIALVFICLLALPFFKDMYVRSSSFRPIYQGIFWLLLADCLLLGWIGCQPVEAPFVTIGQISSIVFFLFFAITPILGRVGRGIPNSYTDETDHT.

4 helical membrane-spanning segments follow: residues 39-59, 83-105, 120-140, and 186-206; these read FGSL…FLAM, WLLR…LHTF, VWCL…IGYV, and FFSL…LHLA. Residues His-89 and His-103 each contribute to the heme b site. His-191 and His-204 together coordinate heme b. His-209 is an a ubiquinone binding site. Helical transmembrane passes span 232–252, 296–316, 328–348, and 355–374; these read FYVK…IWIF, AGGV…PFFK, IYQG…WIGC, and FVTI…AITP.

This sequence belongs to the cytochrome b family. In terms of assembly, the main subunits of complex b-c1 are: cytochrome b, cytochrome c1 and the Rieske protein. Heme b serves as cofactor.

The protein resides in the mitochondrion inner membrane. Functionally, component of the ubiquinol-cytochrome c reductase complex (complex III or cytochrome b-c1 complex) that is part of the mitochondrial respiratory chain. The b-c1 complex mediates electron transfer from ubiquinol to cytochrome c. Contributes to the generation of a proton gradient across the mitochondrial membrane that is then used for ATP synthesis. This is Cytochrome b (MT-CYB) from Oenothera berteroana (Bertero's evening primrose).